The following is a 497-amino-acid chain: Cobyric acid synthase (497 aa).

The region spanning aspartate 251–phenylalanine 443 is the GATase cobBQ-type domain. Cysteine 333 serves as the catalytic Nucleophile. Histidine 435 is an active-site residue.

It belongs to the CobB/CobQ family. CobQ subfamily.

It participates in cofactor biosynthesis; adenosylcobalamin biosynthesis. Catalyzes amidations at positions B, D, E, and G on adenosylcobyrinic A,C-diamide. NH(2) groups are provided by glutamine, and one molecule of ATP is hydrogenolyzed for each amidation. The sequence is that of Cobyric acid synthase from Carboxydothermus hydrogenoformans (strain ATCC BAA-161 / DSM 6008 / Z-2901).